Consider the following 130-residue polypeptide: Small ribosomal subunit protein uS9 (130 aa).

The protein belongs to the universal ribosomal protein uS9 family.

This Syntrophobacter fumaroxidans (strain DSM 10017 / MPOB) protein is Small ribosomal subunit protein uS9.